Reading from the N-terminus, the 309-residue chain is UDP-3-O-acyl-N-acetylglucosamine deacetylase (309 aa).

3 residues coordinate Zn(2+): histidine 78, histidine 235, and aspartate 239. Histidine 262 (proton donor) is an active-site residue.

Belongs to the LpxC family. The cofactor is Zn(2+).

The catalysed reaction is a UDP-3-O-[(3R)-3-hydroxyacyl]-N-acetyl-alpha-D-glucosamine + H2O = a UDP-3-O-[(3R)-3-hydroxyacyl]-alpha-D-glucosamine + acetate. Its pathway is glycolipid biosynthesis; lipid IV(A) biosynthesis; lipid IV(A) from (3R)-3-hydroxytetradecanoyl-[acyl-carrier-protein] and UDP-N-acetyl-alpha-D-glucosamine: step 2/6. Catalyzes the hydrolysis of UDP-3-O-myristoyl-N-acetylglucosamine to form UDP-3-O-myristoylglucosamine and acetate, the committed step in lipid A biosynthesis. The chain is UDP-3-O-acyl-N-acetylglucosamine deacetylase from Syntrophotalea carbinolica (strain DSM 2380 / NBRC 103641 / GraBd1) (Pelobacter carbinolicus).